A 218-amino-acid polypeptide reads, in one-letter code: Fucoxanthin-chlorophyll a-c binding protein, chloroplastic (218 aa).

Residues 1–36 (MFYSAAVAALMVGSASAFLAPAQFNSVAKSSGALSM) constitute a chloroplast transit peptide.

This sequence belongs to the fucoxanthin chlorophyll protein family. In terms of assembly, the LHC complex of chromophytic algae is composed of fucoxanthin, chlorophyll A and C bound non-covalently by fucoxanthin chlorophyll proteins (FCPs). The ratio of pigments in this LHC is; fucoxanthin: chlorophyll C: chlorophyll A; (0.6-1): (0.1-0.3): (1).

Its subcellular location is the plastid. It is found in the chloroplast thylakoid membrane. In terms of biological role, the light-harvesting complex (LHC) functions as a light receptor, it captures and delivers excitation energy to photosystems with which it is closely associated. Energy is transferred from the carotenoid and chlorophyll C (or B) to chlorophyll A and the photosynthetic reaction centers where it is used to synthesize ATP and reducing power. In Chattonella marina var. antiqua (Red tide flagellate), this protein is Fucoxanthin-chlorophyll a-c binding protein, chloroplastic.